The following is a 257-amino-acid chain: MRDVQNEKDYRGIYLRKVGIKNIHWPIKIVTKSGDYQSTVASIDISVDLREDLRGTHMSRFVEVLNGIDSLHPENLGKILQEVREKLRADSSHIKISFPYFIFKKAPVSQISSPNMVECVIDAELSKKLDMIIGVKVPIHTLCPCSKEISEYGAHNQRGVAEIYVRSKKLIWFEDLVEISEKSASAPIYSLLKRPDEKYITEMAYNNPKFVEDVVRDIVSELEKEPKISWYRVEVTSFESIHNHNAFACVEKGWVKK.

This sequence belongs to the GTP cyclohydrolase IV family.

It carries out the reaction GTP + H2O = 7,8-dihydroneopterin 3'-triphosphate + formate + H(+). Its pathway is cofactor biosynthesis; 7,8-dihydroneopterin triphosphate biosynthesis; 7,8-dihydroneopterin triphosphate from GTP: step 1/1. In terms of biological role, converts GTP to 7,8-dihydroneopterin triphosphate. This Dictyoglomus thermophilum (strain ATCC 35947 / DSM 3960 / H-6-12) protein is GTP cyclohydrolase FolE2.